Here is a 355-residue protein sequence, read N- to C-terminus: NADH-quinone oxidoreductase subunit H (355 aa).

8 helical membrane-spanning segments follow: residues 25–45 (VVRI…LILW), 91–111 (WLYL…WAVI), 126–146 (LLYA…AGWA), 170–190 (MGFA…SEIV), 205–225 (FLSW…ISGI), 253–273 (MAFA…SALA), 290–310 (FIPG…VFIW), and 330–350 (VFLP…MSPL).

The protein belongs to the complex I subunit 1 family. In terms of assembly, NDH-1 is composed of 14 different subunits. Subunits NuoA, H, J, K, L, M, N constitute the membrane sector of the complex.

The protein localises to the cell inner membrane. The enzyme catalyses a quinone + NADH + 5 H(+)(in) = a quinol + NAD(+) + 4 H(+)(out). Functionally, NDH-1 shuttles electrons from NADH, via FMN and iron-sulfur (Fe-S) centers, to quinones in the respiratory chain. The immediate electron acceptor for the enzyme in this species is believed to be ubiquinone. Couples the redox reaction to proton translocation (for every two electrons transferred, four hydrogen ions are translocated across the cytoplasmic membrane), and thus conserves the redox energy in a proton gradient. This subunit may bind ubiquinone. The protein is NADH-quinone oxidoreductase subunit H of Burkholderia cenocepacia (strain HI2424).